The following is a 318-amino-acid chain: Gamma-glutamyl hydrolase (318 aa).

Residues 1–24 (MASPGCLLCVLGLLLCGAASLELS) form the signal peptide. Positions 25 to 318 (RPHGDTAKKP…SSFQQCYIFD (294 aa)) constitute a Gamma-glutamyl hydrolase domain. Residue Asn-116 is glycosylated (N-linked (GlcNAc...) asparagine). Cys-134 functions as the Nucleophile in the catalytic mechanism. N-linked (GlcNAc...) asparagine glycans are attached at residues Asn-163 and Asn-203. His-244 serves as the catalytic Proton donor. Asn-307 carries N-linked (GlcNAc...) asparagine; partial glycosylation.

The protein belongs to the peptidase C26 family. In terms of assembly, homodimer.

Its subcellular location is the secreted. It is found in the extracellular space. The protein localises to the lysosome. The protein resides in the melanosome. The enzyme catalyses (6S)-5,6,7,8-tetrahydrofolyl-(gamma-L-Glu)(n) + (n-1) H2O = (6S)-5,6,7,8-tetrahydrofolate + (n-1) L-glutamate. Its function is as follows. Hydrolyzes the polyglutamate sidechains of pteroylpolyglutamates. Progressively removes gamma-glutamyl residues from pteroylpoly-gamma-glutamate to yield pteroyl-alpha-glutamate (folic acid) and free glutamate. May play an important role in the bioavailability of dietary pteroylpolyglutamates and in the metabolism of pteroylpolyglutamates and antifolates. The chain is Gamma-glutamyl hydrolase from Homo sapiens (Human).